We begin with the raw amino-acid sequence, 118 residues long: Hydrogenase maturation factor HypA (118 aa).

H2 contacts Ni(2+). Zn(2+)-binding residues include C73, C76, C89, and C92.

This sequence belongs to the HypA/HybF family.

Its function is as follows. Involved in the maturation of [NiFe] hydrogenases. Required for nickel insertion into the metal center of the hydrogenase. In Shewanella sp. (strain MR-7), this protein is Hydrogenase maturation factor HypA.